We begin with the raw amino-acid sequence, 962 residues long: RNA-binding protein 15 (962 aa).

Composition is skewed to basic and acidic residues over residues 1-10, 34-52, and 59-72; these read MRSAGREPLP, LRRD…ERSP, and RGGE…ERSK. The segment at 1–167 is disordered; that stretch reads MRSAGREPLP…SAPGGGDGVE (167 aa). A compositionally biased stretch (low complexity) spans 82–94; it reads GSSSGKTDSGGSR. The segment covering 97–112 has biased composition (basic and acidic residues); that stretch reads LHLDKSSSRGGSREYE. Serine 108 is subject to Phosphoserine. The segment covering 118-129 has biased composition (low complexity); sequence SSSRLHSYSSPS. Residues 134–149 are compositionally biased toward gly residues; it reads SGGGESRSSSRGGGGE. Residues 150–159 are compositionally biased toward low complexity; the sequence is SRSSGAASSA. Residues 169–251 form the RRM 1 domain; sequence KTLKISELGS…RPLKIEAVYV (83 aa). 3 positions are modified to phosphoserine: serine 178, serine 207, and serine 209. A Glycyl lysine isopeptide (Lys-Gly) (interchain with G-Cter in SUMO2) cross-link involves residue lysine 245. Serine 252, serine 256, and serine 258 each carry phosphoserine. Positions 257-297 are disordered; the sequence is RSPLDKDAYAPSSSVVGTSVGSHRHAPGGGGGQRSLSPGGA. At tyrosine 265 the chain carries Phosphotyrosine. Over residues 268-277 the composition is skewed to low complexity; sequence SSSVVGTSVG. Phosphoserine is present on residues serine 291, serine 293, and serine 364. 2 RRM domains span residues 373–450 and 454–528; these read RTLF…YGKA and TRLW…FADT. Residues lysine 405, lysine 419, and lysine 444 each participate in a glycyl lysine isopeptide (Lys-Gly) (interchain with G-Cter in SUMO2) cross-link. An N6-acetyllysine modification is found at lysine 449. Basic and acidic residues-rich tracts occupy residues 553 to 580 and 612 to 661; these read GHRA…RDLY and SLDR…SERP. The disordered stretch occupies residues 553-779; the sequence is GHRAPDPLRS…KQDGGTAPVA (227 aa). Position 567 is a phosphothreonine (threonine 567). At arginine 577 the chain carries Asymmetric dimethylarginine; alternate; by PRMT1. Residue arginine 577 is modified to Omega-N-methylarginine; alternate; by PRMT1. Serine 621, serine 655, serine 670, serine 674, and serine 701 each carry phosphoserine. Composition is skewed to basic and acidic residues over residues 673–692, 701–729, and 742–751; these read RSPE…DRSS, SPVR…AERD, and NPLKKEDRSD. A Glycyl lysine isopeptide (Lys-Gly) (interchain with G-Cter in SUMO2) cross-link involves residue lysine 745. A compositionally biased stretch (low complexity) spans 754–771; it reads APSASTSSSKQKPPSQKQ. Residues serine 768 and serine 782 each carry the phosphoserine modification. One can recognise an SPOC domain in the interval 778 to 957; that stretch reads VAASSPKLCL…YLVMIIVRAK (180 aa). The interval 866–885 is disordered; the sequence is GSSDSRSSSSSATSDTAAST. Positions 867-885 are enriched in low complexity; it reads SSDSRSSSSSATSDTAAST. Position 936 is a phosphoserine (serine 936).

This sequence belongs to the RRM Spen family. As to quaternary structure, component of the WMM complex, a N6-methyltransferase complex composed of a catalytic subcomplex, named MAC, and of an associated subcomplex, named MACOM. The MAC subcomplex is composed of METTL3 and METTL14. The MACOM subcomplex is composed of WTAP, ZC3H13, CBLL1/HAKAI, VIRMA, and, in some cases of RBM15 (RBM15 or RBM15B). Also a component of a MACOM-like complex, named WTAP complex, composed of WTAP, ZC3H13, CBLL1, VIRMA, RBM15, BCLAF1 and THRAP3. Interacts with RBPJ. Interacts (via SPOC domain) with SETD1B. Interacts with NXF1, the interaction is required to promote mRNA export. Interacts with SF3B1. Methylated at Arg-577 by PRMT1, leading to promote ubiquitination by CNOT4 and subsequent degradation by the proteasome. Post-translationally, ubiquitinated by CNOT4 following methylation at Arg-577 by PRMT1.

The protein resides in the nucleus speckle. The protein localises to the nucleus. It localises to the nucleoplasm. It is found in the nucleus envelope. Its subcellular location is the nucleus membrane. Its function is as follows. RNA-binding protein that acts as a key regulator of N6-methyladenosine (m6A) methylation of RNAs, thereby regulating different processes, such as hematopoietic cell homeostasis, alternative splicing of mRNAs and X chromosome inactivation mediated by Xist RNA. Associated component of the WMM complex, a complex that mediates N6-methyladenosine (m6A) methylation of RNAs, a modification that plays a role in the efficiency of mRNA splicing and RNA processing. Plays a key role in m6A methylation, possibly by binding target RNAs and recruiting the WMM complex. Involved in random X inactivation mediated by Xist RNA: acts by binding Xist RNA and recruiting the WMM complex, which mediates m6A methylation, leading to target YTHDC1 reader on Xist RNA and promoting transcription repression activity of Xist. Required for the development of multiple tissues, such as the maintenance of the homeostasis of long-term hematopoietic stem cells and for megakaryocyte (MK) and B-cell differentiation. Regulates megakaryocyte differentiation by regulating alternative splicing of genes important for megakaryocyte differentiation; probably regulates alternative splicing via m6A regulation. Required for placental vascular branching morphogenesis and embryonic development of the heart and spleen. Acts as a regulator of thrombopoietin response in hematopoietic stem cells by regulating alternative splicing of MPL. May also function as an mRNA export factor, stimulating export and expression of RTE-containing mRNAs which are present in many retrotransposons that require to be exported prior to splicing. High affinity binding of pre-mRNA to RBM15 may allow targeting of the mRNP to the export helicase DBP5 in a manner that is independent of splicing-mediated NXF1 deposition, resulting in export prior to splicing. May be implicated in HOX gene regulation. This is RNA-binding protein 15 from Mus musculus (Mouse).